The chain runs to 362 residues: Glutamate 5-kinase (362 aa).

K3 contacts ATP. S43, D128, and N140 together coordinate substrate. ATP is bound by residues 160-161 (TD) and 202-208 (TGGMRTK). The region spanning 267–348 (PGTILIDAGA…REIEPILGYS (82 aa)) is the PUA domain.

Belongs to the glutamate 5-kinase family.

Its subcellular location is the cytoplasm. It carries out the reaction L-glutamate + ATP = L-glutamyl 5-phosphate + ADP. Its pathway is amino-acid biosynthesis; L-proline biosynthesis; L-glutamate 5-semialdehyde from L-glutamate: step 1/2. In terms of biological role, catalyzes the transfer of a phosphate group to glutamate to form L-glutamate 5-phosphate. The sequence is that of Glutamate 5-kinase from Xanthomonas campestris pv. campestris (strain 8004).